The following is a 227-amino-acid chain: 3,4-dihydroxy-2-butanone 4-phosphate synthase (227 aa).

D-ribulose 5-phosphate-binding positions include 45-46 (RE), D50, 158-162 (RRGHT), and E182. Position 46 (E46) interacts with Mg(2+). Position 161 (H161) interacts with Mg(2+).

The protein belongs to the DHBP synthase family. Homodimer. Requires Mg(2+) as cofactor. Mn(2+) serves as cofactor.

It catalyses the reaction D-ribulose 5-phosphate = (2S)-2-hydroxy-3-oxobutyl phosphate + formate + H(+). It participates in cofactor biosynthesis; riboflavin biosynthesis; 2-hydroxy-3-oxobutyl phosphate from D-ribulose 5-phosphate: step 1/1. Its function is as follows. Catalyzes the conversion of D-ribulose 5-phosphate to formate and 3,4-dihydroxy-2-butanone 4-phosphate. The chain is 3,4-dihydroxy-2-butanone 4-phosphate synthase from Ralstonia nicotianae (strain ATCC BAA-1114 / GMI1000) (Ralstonia solanacearum).